A 346-amino-acid chain; its full sequence is N-acetyl-gamma-glutamyl-phosphate reductase (346 aa).

Cys-149 is an active-site residue.

It belongs to the NAGSA dehydrogenase family. Type 1 subfamily.

The protein resides in the cytoplasm. It catalyses the reaction N-acetyl-L-glutamate 5-semialdehyde + phosphate + NADP(+) = N-acetyl-L-glutamyl 5-phosphate + NADPH + H(+). It functions in the pathway amino-acid biosynthesis; L-arginine biosynthesis; N(2)-acetyl-L-ornithine from L-glutamate: step 3/4. Catalyzes the NADPH-dependent reduction of N-acetyl-5-glutamyl phosphate to yield N-acetyl-L-glutamate 5-semialdehyde. In Pelobacter propionicus (strain DSM 2379 / NBRC 103807 / OttBd1), this protein is N-acetyl-gamma-glutamyl-phosphate reductase.